The following is a 311-amino-acid chain: MLQAENIKKAYGKKTIVKGISFSLKKGESFGLLGPNGAGKSTTISMISGLVPHDSGNITVGGYVIGKETAKAKQKIGIVPQEIALYPTLTAHENLMFWGKMYGLTHGEAKKRAAEVLEYVGLTERAKDKIETFSGGMKRRINIGAALMHKPELLIMDEPTVGIDPQSRNHILETVKQLNETGMTVIYTSHYMEEVEFLCDRIGIIDQGEMIAIGTKTDLCSRLGGDTIIQLTVSGINEAFLVAIRSLAHVNDVTVHELELKIDISAAHHEKVVTSLLAEATAHHINLLSLQVQEPNLERLFLNLTGRTLRD.

In terms of domain architecture, ABC transporter spans L2–T232. Residue G34–S41 participates in ATP binding.

It belongs to the ABC transporter superfamily. The complex is composed of two ATP-binding proteins (LnrL) and two transmembrane proteins (LnrM and LnrN).

Functionally, required for resistance to linearmycins, a family of antibiotic-specialized metabolites produced by some streptomycetes. Part of the ABC transporter complex LnrLMN that probably facilitates linearmycin removal from the membrane. Responsible for energy coupling to the transport system. Also mediates KinC-dependent biofilm morphology. This is Linearmycin resistance ATP-binding protein LnrL from Bacillus subtilis (strain 168).